The primary structure comprises 156 residues: Endoribonuclease YbeY (156 aa).

3 residues coordinate Zn(2+): histidine 117, histidine 121, and histidine 127.

Belongs to the endoribonuclease YbeY family. Zn(2+) is required as a cofactor.

Its subcellular location is the cytoplasm. Functionally, single strand-specific metallo-endoribonuclease involved in late-stage 70S ribosome quality control and in maturation of the 3' terminus of the 16S rRNA. The sequence is that of Endoribonuclease YbeY from Shewanella piezotolerans (strain WP3 / JCM 13877).